Here is an 88-residue protein sequence, read N- to C-terminus: Fe-S protein maturation auxiliary factor SufT (88 aa).

It belongs to the MIP18 family.

Functionally, involved in the maturation of iron-sulfur (Fe-S) proteins. May function as a Fe-S cluster carrier. Is required for S.aureus growth under conditions that impose a high demand for lipoic acid, likely via a role in the maturation of the lipoate synthase LipA. Is non-essential for growth in conditions that impose a low demand for lipoic acid or Fe-S clusters, such as fermentative growth. Also seems to be involved in the maturation of AcnA, LeuCD and IlvD proteins, that utilize Fe-S cluster cofactors, and its role increases under conditions of high-demand for Fe-S clusters (respiratory growth). Is not involved in the repair of Fe-S clusters damaged by reactive oxygen species or in the physical protection of Fe-S clusters from oxidants. Displays synergy with the Fe-S cluster carrier Nfu. The sequence is that of Fe-S protein maturation auxiliary factor SufT from Staphylococcus aureus (strain USA300).